A 779-amino-acid chain; its full sequence is Glucan endo-1,3-beta-D-glucosidase 2 (779 aa).

Residues 1-71 (MCYSRQAIPP…SNPLADSQVN (71 aa)) form a disordered region. Positions 57 to 71 (RTPSSSNPLADSQVN) are enriched in polar residues. The interval 73-309 (DNIFQSPVLS…NGLICQLSAD (237 aa)) is beta-sandwich subdomain. The 707-residue stretch at 73–779 (DNIFQSPVLS…WSLAYSGAFS (707 aa)) folds into the GH81 domain. The tract at residues 309 to 400 (DSVPSIDMAA…LTNSFDMQVQ (92 aa)) is alpha/beta subdomain. The interval 375-779 (IASSLDSTVK…WSLAYSGAFS (405 aa)) is sufficient for catalytic activity. Residues 415–779 (NKKADYSQEK…WSLAYSGAFS (365 aa)) are (alpha/beta)6 barrel subdomain. Aspartate 526 is a catalytic residue. 4 residues coordinate (1,3-beta-D-glucosyl)n: histidine 530, aspartate 607, glutamate 609, and glutamate 613. Catalysis depends on residues glutamate 609 and glutamate 613. The segment at 678 to 680 (KID) is may provide specificity for triple-helical beta-glucan. Position 691 (tyrosine 691) interacts with (1,3-beta-D-glucosyl)n.

The protein belongs to the glycosyl hydrolase 81 family.

The protein localises to the cytoplasm. The catalysed reaction is Hydrolysis of (1-&gt;3)-beta-D-glucosidic linkages in (1-&gt;3)-beta-D-glucans.. Inhibited by mercury ions. In terms of biological role, cleaves internal linkages in 1,3-beta-glucan. This Saccharomyces cerevisiae (strain ATCC 204508 / S288c) (Baker's yeast) protein is Glucan endo-1,3-beta-D-glucosidase 2.